The sequence spans 276 residues: uncharacterized protein (276 aa).

Residues 1-19 (MKKWLICSFVLVLLVSFTA) form the signal peptide. The N-palmitoyl cysteine moiety is linked to residue Cys-20. Cys-20 carries S-diacylglycerol cysteine lipidation.

It belongs to the NlpA lipoprotein family.

The protein localises to the cell membrane. This is an uncharacterized protein from Bacillus subtilis (strain 168).